Reading from the N-terminus, the 261-residue chain is Na(+)-translocating NADH-quinone reductase subunit C (261 aa).

A helical transmembrane segment spans residues 11–31 (LLVALVVCLVSSVFVAGAAVA). T230 is subject to FMN phosphoryl threonine.

Belongs to the NqrC family. As to quaternary structure, composed of six subunits; NqrA, NqrB, NqrC, NqrD, NqrE and NqrF. It depends on FMN as a cofactor.

It localises to the cell inner membrane. It catalyses the reaction a ubiquinone + n Na(+)(in) + NADH + H(+) = a ubiquinol + n Na(+)(out) + NAD(+). NQR complex catalyzes the reduction of ubiquinone-1 to ubiquinol by two successive reactions, coupled with the transport of Na(+) ions from the cytoplasm to the periplasm. NqrA to NqrE are probably involved in the second step, the conversion of ubisemiquinone to ubiquinol. The sequence is that of Na(+)-translocating NADH-quinone reductase subunit C from Pseudomonas aeruginosa (strain ATCC 15692 / DSM 22644 / CIP 104116 / JCM 14847 / LMG 12228 / 1C / PRS 101 / PAO1).